The following is a 317-amino-acid chain: Melanocyte-stimulating hormone receptor (317 aa).

The Extracellular segment spans residues 1-37; sequence MPVQGSQRRLLGSLNSTPTATPHLGLAANQTGARCLE. Asparagine 29 carries N-linked (GlcNAc...) asparagine glycosylation. A helical membrane pass occupies residues 38 to 63; sequence VSIPDGLFLSLGLVSLVENVLVVTAI. Topologically, residues 64–72 are cytoplasmic; that stretch reads AKNRNLHSP. A helical transmembrane segment spans residues 73–93; sequence MYCFICCLALSDLLVSGSNML. Residues 94–118 lie on the Extracellular side of the membrane; the sequence is ETAVTLLLEAGALAARAAVVQQLDN. The helical transmembrane segment at 119-140 threads the bilayer; it reads VIDVITCSSMLSSLCFLGAIAV. Residues 141–163 lie on the Cytoplasmic side of the membrane; that stretch reads DRYISIFYALRYHSIVTLPRARR. Residues 164–183 form a helical membrane-spanning segment; sequence AVAAIWVASVLFSMLFIAYY. Over 184 to 191 the chain is Extracellular; sequence DHAAVLLC. The helical transmembrane segment at 192–211 threads the bilayer; it reads LVVFFLAMLVLMAVLYVHML. The Cytoplasmic segment spans residues 212–240; that stretch reads ARACQHAQGIARLHKRQRPAHQGFGLKGA. A helical transmembrane segment spans residues 241–266; that stretch reads ATLTILLGIFFLCWGPFFLHLTLIVL. Residues 267 to 279 are Extracellular-facing; the sequence is CPQHPTCSCIFKN. A helical membrane pass occupies residues 280–300; that stretch reads FNLFLALIICNAIIDPLIYAF. Over 301 to 317 the chain is Cytoplasmic; it reads RSQELRRTLKEVLLCSW. Residue cysteine 315 is the site of S-palmitoyl cysteine attachment.

The protein belongs to the G-protein coupled receptor 1 family. Interacts with MGRN1, but does not undergo MGRN1-mediated ubiquitination; this interaction competes with GNAS-binding and thus inhibits agonist-induced cAMP production. Interacts with OPN3; the interaction results in a decrease in MC1R-mediated cAMP signaling and ultimately a decrease in melanin production in melanocytes.

It is found in the cell membrane. In terms of biological role, receptor for MSH (alpha, beta and gamma) and ACTH. The activity of this receptor is mediated by G proteins which activate adenylate cyclase. Mediates melanogenesis, the production of eumelanin (black/brown) and phaeomelanin (red/yellow), via regulation of cAMP signaling in melanocytes. The protein is Melanocyte-stimulating hormone receptor (MC1R) of Miopithecus talapoin (Angolan talapoin).